The following is a 256-amino-acid chain: 1-(5-phosphoribosyl)-5-[(5-phosphoribosylamino)methylideneamino] imidazole-4-carboxamide isomerase (256 aa).

Asp8 (proton acceptor) is an active-site residue. Residue Asp130 is the Proton donor of the active site.

It belongs to the HisA/HisF family.

The protein localises to the cytoplasm. The catalysed reaction is 1-(5-phospho-beta-D-ribosyl)-5-[(5-phospho-beta-D-ribosylamino)methylideneamino]imidazole-4-carboxamide = 5-[(5-phospho-1-deoxy-D-ribulos-1-ylimino)methylamino]-1-(5-phospho-beta-D-ribosyl)imidazole-4-carboxamide. It participates in amino-acid biosynthesis; L-histidine biosynthesis; L-histidine from 5-phospho-alpha-D-ribose 1-diphosphate: step 4/9. This is 1-(5-phosphoribosyl)-5-[(5-phosphoribosylamino)methylideneamino] imidazole-4-carboxamide isomerase from Pelodictyon phaeoclathratiforme (strain DSM 5477 / BU-1).